The following is a 344-amino-acid chain: MQTLTIIRPDDMHLHLRDGDALKAVAPYTARQMGRAVIMPNLKPPVVSVADALAYKARIMAALPEGSAFEPLMTLYLTDQATPELVREAKAAGIVAFKLYPAGATTNSDSGVTDLFKLIPVLEEMAKQGILFLVHGEVTDPEIDIFDREAAFIGRVMKPVLAQVPNLKVVFEHITTAEAARLVLEAGDNVAASVTPQHLLLNRNDLLVGGVRPHHFCLPVLKRETHRQALVAAVTGEKAHKFFLGTDSAPHAKSAKENACGCAGMFSAMTAIELYAEVFEKAGALDKLEAFASENGARFYGIPENADTITLVKQSQTVPASVPYGDGELVPMRAGGEIGWTVQY.

Zn(2+) is bound by residues His-13 and His-15. Residues 15 to 17 (HLR) and Asn-41 each bind substrate. Zn(2+) is bound by residues Lys-98, His-135, and His-173. The residue at position 98 (Lys-98) is an N6-carboxylysine. Position 135 (His-135) interacts with substrate. Leu-218 lines the substrate pocket. Asp-247 is a binding site for Zn(2+). Asp-247 is a catalytic residue. Positions 251 and 263 each coordinate substrate.

This sequence belongs to the metallo-dependent hydrolases superfamily. DHOase family. Class II DHOase subfamily. As to quaternary structure, homodimer. Zn(2+) is required as a cofactor.

It carries out the reaction (S)-dihydroorotate + H2O = N-carbamoyl-L-aspartate + H(+). The protein operates within pyrimidine metabolism; UMP biosynthesis via de novo pathway; (S)-dihydroorotate from bicarbonate: step 3/3. Its function is as follows. Catalyzes the reversible cyclization of carbamoyl aspartate to dihydroorotate. In Neisseria gonorrhoeae (strain NCCP11945), this protein is Dihydroorotase.